The following is a 1060-amino-acid chain: Probable serine/threonine-protein kinase MARK-A (1060 aa).

2 stretches are compositionally biased toward basic and acidic residues: residues 1–11 and 23–37; these read METLKEEEQFR and HLKE…EREQ. Disordered regions lie at residues 1-52 and 67-88; these read METL…LQLQ and NKIP…SISV. 2 stretches are compositionally biased toward low complexity: residues 38-52 and 68-88; these read QQQQ…LQLQ and KIPS…SISV. In terms of domain architecture, Protein kinase spans 109–361; that stretch reads YLVIKTIGRG…MEEIINHPWL (253 aa). ATP contacts are provided by residues 115-123 and Lys139; that span reads IGRGQFGKV. Asp232 acts as the Proton acceptor in catalysis. A compositionally biased stretch (low complexity) spans 409 to 475; sequence INNINNTMAT…TTTTNATTTT (67 aa). Disordered regions lie at residues 409 to 488, 560 to 701, 714 to 886, and 899 to 966; these read INNI…NNEE, GENS…SPLC, LREK…PVHS, and DDKS…QEPR. In terms of domain architecture, UBA spans 488-528; the sequence is ELDQEIIEELVGLGFEREELCNSIRQNKYNDAASTYFLLQG. Over residues 577–594 the composition is skewed to polar residues; the sequence is TVDSPKSTNTPQYRSSNT. Low complexity-rich tracts occupy residues 603–613, 620–637, 650–699, and 720–760; these read QQQQQQQQQQQ, QQQN…NNHN, STTV…NPSP, and TTTN…TSPN. A compositionally biased stretch (polar residues) spans 761–770; it reads LQPFSLASTA. 2 stretches are compositionally biased toward low complexity: residues 771–799 and 811–831; these read NNNN…SLNS and QQQQ…NSSS. Residues 837-846 are compositionally biased toward basic and acidic residues; it reads QRQESRKLED. Composition is skewed to low complexity over residues 904 to 926 and 935 to 965; these read NSSS…TNNT and QNSN…QQEP. Residues 1008-1057 form the KA1 domain; the sequence is IECETEGVRFSIEICRLPRLSVNGLKFKRIGGSSWRYKSICKDLLSQMKL.

This sequence belongs to the protein kinase superfamily. CAMK Ser/Thr protein kinase family. SNF1 subfamily.

It catalyses the reaction L-seryl-[protein] + ATP = O-phospho-L-seryl-[protein] + ADP + H(+). It carries out the reaction L-threonyl-[protein] + ATP = O-phospho-L-threonyl-[protein] + ADP + H(+). This is Probable serine/threonine-protein kinase MARK-A (mrkA) from Dictyostelium discoideum (Social amoeba).